The following is a 231-amino-acid chain: MEGGRGVTRVLLVDDSPVDRRVVQLLLSSSACAGSFHVIAVDSAKKAMEFLGLKEEGKEQAIDMVLTDYCMPEMTGYELLKAIKALSPLKPIPVIVMSSENEPQRISRCMNAGAEDFIVKPLQSKDVQRLRKCSPANTQCCDAGSDGKPPLLLLPSDHVVVDATAASPPPPPSRRRAHFAGVAMVLHSSSVELSHYFPFLFKFILLVYAILCLGELLHRWSNGCFLNLWCA.

The 127-residue stretch at 9-135 (RVLLVDDSPV…DVQRLRKCSP (127 aa)) folds into the Response regulatory domain. D68 is modified (4-aspartylphosphate).

The protein belongs to the ARR family. Type-A subfamily. Post-translationally, two-component system major event consists of a His-to-Asp phosphorelay between a sensor histidine kinase (HK) and a response regulator (RR). In plants, the His-to-Asp phosphorelay involves an additional intermediate named Histidine-containing phosphotransfer protein (HPt). This multistep phosphorelay consists of a His-Asp-His-Asp sequential transfer of a phosphate group between first a His and an Asp of the HK protein, followed by the transfer to a conserved His of the HPt protein and finally the transfer to an Asp in the receiver domain of the RR protein. In terms of tissue distribution, expressed in mature leaves and flowers, and at low levels in roots and shoots.

Functions as a response regulator involved in His-to-Asp phosphorelay signal transduction system. Phosphorylation of the Asp residue in the receiver domain activates the ability of the protein to promote the transcription of target genes. Type-A response regulators seem to act as negative regulators of the cytokinin signaling. In Oryza sativa subsp. indica (Rice), this protein is Two-component response regulator ORR1.